Consider the following 352-residue polypeptide: Chymopapain (352 aa).

The first 18 residues, 1-18 (MATMSSISKIIFLATCLI), serve as a signal peptide directing secretion. The propeptide at 19–134 (IHMGLSSADF…EDFTYKHVTN (116 aa)) is activation peptide. Asn-86 is a glycosylation site (N-linked (GlcNAc...) asparagine). Disulfide bonds link Cys-156–Cys-197, Cys-190–Cys-229, and Cys-287–Cys-338. Residue Cys-159 is part of the active site. Residues His-293 and Asn-313 contribute to the active site.

Belongs to the peptidase C1 family.

The enzyme catalyses Specificity similar to that of papain.. In terms of biological role, cysteine proteinase with a high level of diversity in substrate specificity. The protein is Chymopapain of Carica papaya (Papaya).